A 508-amino-acid chain; its full sequence is Ell-associated factor Eaf (508 aa).

Composition is skewed to polar residues over residues 140–150 and 161–190; these read GQGQLHSQGAN and GHST…SRRN. 2 disordered regions span residues 140-226 and 251-508; these read GQGQ…WDAN and HNSG…DDDE. Ser-200 is subject to Phosphoserine. Over residues 251–268 the composition is skewed to low complexity; sequence HNSGHANTSGSSTGSATG. Polar residues-rich tracts occupy residues 272-281 and 296-313; these read FGSTSSSSHM and QQMQ…QQPS. A compositionally biased stretch (low complexity) spans 314-341; that stretch reads NYGRGYNGGHNHVQQQQQRNSPQQQRPP. The segment covering 391-406 has biased composition (acidic residues); it reads DSSDSDSGSDSDDSTE. Composition is skewed to low complexity over residues 412-444, 461-477, and 489-502; these read QGQQ…HLNQ, HQHQ…QKQQ, and NDLL…SSNS.

The protein belongs to the EAF family.

It localises to the nucleus. Its function is as follows. Promotes transcriptional elongation by Su(Tpl)/ELL. Essential for development. This chain is Ell-associated factor Eaf, found in Drosophila erecta (Fruit fly).